Here is a 454-residue protein sequence, read N- to C-terminus: Histidine--tRNA ligase (454 aa).

The segment at 434–454 (ADAGAWNPPTEDLHPGVIGTW) is disordered.

It belongs to the class-II aminoacyl-tRNA synthetase family. As to quaternary structure, homodimer.

It localises to the cytoplasm. The catalysed reaction is tRNA(His) + L-histidine + ATP = L-histidyl-tRNA(His) + AMP + diphosphate + H(+). The chain is Histidine--tRNA ligase (hisS) from Cutibacterium acnes (strain DSM 16379 / KPA171202) (Propionibacterium acnes).